Reading from the N-terminus, the 412-residue chain is Alanyl-tRNA editing protein Aarsd1-B (412 aa).

The Zn(2+) site is built by H108, H112, C208, and H212.

The protein belongs to the class-II aminoacyl-tRNA synthetase family. Alax-L subfamily. It depends on Zn(2+) as a cofactor.

It is found in the cytoplasm. In terms of biological role, functions in trans to edit the amino acid moiety from incorrectly charged tRNA(Ala). In Xenopus laevis (African clawed frog), this protein is Alanyl-tRNA editing protein Aarsd1-B (aarsd1-b).